We begin with the raw amino-acid sequence, 79 residues long: Sulfur carrier protein TusA (79 aa).

Cys17 serves as the catalytic Cysteine persulfide intermediate.

This sequence belongs to the sulfur carrier protein TusA family.

It is found in the cytoplasm. Sulfur carrier protein which probably makes part of a sulfur-relay system. The sequence is that of Sulfur carrier protein TusA from Haemophilus influenzae (strain PittEE).